A 410-amino-acid polypeptide reads, in one-letter code: Sulfate adenylyltransferase (410 aa).

This sequence belongs to the sulfate adenylyltransferase family.

The enzyme catalyses sulfate + ATP + H(+) = adenosine 5'-phosphosulfate + diphosphate. Its pathway is sulfur metabolism; hydrogen sulfide biosynthesis; sulfite from sulfate: step 1/3. This is Sulfate adenylyltransferase from Syntrophobacter fumaroxidans (strain DSM 10017 / MPOB).